The chain runs to 192 residues: MELASGTTLVAPQPKGILDPATGKPIGSNDAFFGEINNELADKGFLVTSTDELINWARTGSLMWMTFGLACCAVEMMQMSMPRYDAERFGFAPRASPRQSDVMIVAGTLTNKMAPALRKVYDQMPEPRYVISMGSCANGGGYYHYSYSVVRGCDRVVPVDIYVPGCPPTAEALLYGVLLLQKKIRRTGTIER.

Residues cysteine 71, cysteine 72, cysteine 136, and cysteine 166 each contribute to the [4Fe-4S] cluster site.

It belongs to the complex I 20 kDa subunit family. NDH-1 is composed of 14 different subunits. Subunits NuoB, C, D, E, F, and G constitute the peripheral sector of the complex. [4Fe-4S] cluster serves as cofactor.

Its subcellular location is the cell inner membrane. It carries out the reaction a quinone + NADH + 5 H(+)(in) = a quinol + NAD(+) + 4 H(+)(out). Its function is as follows. NDH-1 shuttles electrons from NADH, via FMN and iron-sulfur (Fe-S) centers, to quinones in the respiratory chain. The immediate electron acceptor for the enzyme in this species is believed to be ubiquinone. Couples the redox reaction to proton translocation (for every two electrons transferred, four hydrogen ions are translocated across the cytoplasmic membrane), and thus conserves the redox energy in a proton gradient. The chain is NADH-quinone oxidoreductase subunit B 1 from Rhizobium meliloti (strain 1021) (Ensifer meliloti).